We begin with the raw amino-acid sequence, 174 residues long: Putative serine protease 46 (174 aa).

Residues 43–174 (VVKGKLVEVG…IGWGTTGKKG (132 aa)) form the Peptidase S1 domain. An intrachain disulfide couples C68 to C84. Catalysis depends on charge relay system residues H83 and D128.

The protein belongs to the peptidase S1 family.

This is Putative serine protease 46 from Homo sapiens (Human).